A 1196-amino-acid polypeptide reads, in one-letter code: Cingulin (1196 aa).

Positions 7–354 are head; that stretch reads MAEPRGPVDH…LVMTSGSAKG (348 aa). A ZIM motif is present at residues 48 to 62; that stretch reads ANTYGVAVRVQGIAG. Residues 54 to 67 are interaction with TJP1/ZO1; the sequence is AVRVQGIAGQPFVV. The segment at 82 to 105 is disordered; sequence IKGTNNRGPPGALSSDSELPESTY. A phosphoserine mark is found at S95, S96, S98, S135, S137, S140, S155, S165, and S214. Over residues 95 to 105 the composition is skewed to polar residues; that stretch reads SSDSELPESTY. The segment at 183–263 is disordered; the sequence is NKFDSRQGGQ…NQGPLGGFSC (81 aa). Residues 218–231 show a composition bias toward basic and acidic residues; the sequence is RLPRDTLDEREHQF. Residues 245-256 are compositionally biased toward polar residues; it reads MGNSKQSSQNQG. Residue S274 is modified to Phosphoserine. Positions 355-1150 form a coiled coil; that stretch reads LTGQSELSQK…ARIKTLEKDS (796 aa). N6-acetyllysine is present on K576. A compositionally biased stretch (basic and acidic residues) spans 884–897; the sequence is AQRQAKEWATEAEK. Disordered stretches follow at residues 884–906, 1023–1061, and 1149–1174; these read AQRQAKEWATEAEKNSGGLSRLQ, DLKSRLASSEGFQKPSASLSQLESQNQELQERLQAEERE, and DSWRKASRSAAESAQREGLSSDEEFD. Low complexity predominate over residues 1038 to 1050; the sequence is SASLSQLESQNQE. The span at 1051 to 1061 shows a compositional bias: basic and acidic residues; sequence LQERLQAEERE. The tail stretch occupies residues 1155-1196; it reads SRSAAESAQREGLSSDEEFDSVYDPSSIASLLTESNLQTSSC. Residues S1168, S1169, and S1175 each carry the phosphoserine modification.

This sequence belongs to the cingulin family. As to quaternary structure, homodimer. Interacts with TJP1/ZO1 and SPEF1.

The protein localises to the cell junction. It localises to the tight junction. Its function is as follows. Probably plays a role in the formation and regulation of the tight junction (TJ) paracellular permeability barrier. The chain is Cingulin from Canis lupus familiaris (Dog).